A 729-amino-acid polypeptide reads, in one-letter code: Fatty acid oxidation complex subunit alpha (729 aa).

Residues 1 to 189 (MLYKGDTLYL…KIGLVDGVVK (189 aa)) form an enoyl-CoA hydratase/isomerase region. Aspartate 296 contacts substrate. The 3-hydroxyacyl-CoA dehydrogenase stretch occupies residues 311–729 (ETPKHAAVLG…ARPVGELKTA (419 aa)). NAD(+) contacts are provided by residues methionine 324, aspartate 343, 400–402 (VVE), lysine 407, and serine 429. Catalysis depends on histidine 450, which acts as the For 3-hydroxyacyl-CoA dehydrogenase activity. Asparagine 453 is a binding site for NAD(+). Substrate is bound by residues asparagine 500 and tyrosine 660.

The protein in the N-terminal section; belongs to the enoyl-CoA hydratase/isomerase family. It in the C-terminal section; belongs to the 3-hydroxyacyl-CoA dehydrogenase family. Heterotetramer of two alpha chains (FadB) and two beta chains (FadA).

The enzyme catalyses a (3S)-3-hydroxyacyl-CoA + NAD(+) = a 3-oxoacyl-CoA + NADH + H(+). It carries out the reaction a (3S)-3-hydroxyacyl-CoA = a (2E)-enoyl-CoA + H2O. It catalyses the reaction a 4-saturated-(3S)-3-hydroxyacyl-CoA = a (3E)-enoyl-CoA + H2O. The catalysed reaction is (3S)-3-hydroxybutanoyl-CoA = (3R)-3-hydroxybutanoyl-CoA. The enzyme catalyses a (3Z)-enoyl-CoA = a 4-saturated (2E)-enoyl-CoA. It carries out the reaction a (3E)-enoyl-CoA = a 4-saturated (2E)-enoyl-CoA. It functions in the pathway lipid metabolism; fatty acid beta-oxidation. In terms of biological role, involved in the aerobic and anaerobic degradation of long-chain fatty acids via beta-oxidation cycle. Catalyzes the formation of 3-oxoacyl-CoA from enoyl-CoA via L-3-hydroxyacyl-CoA. It can also use D-3-hydroxyacyl-CoA and cis-3-enoyl-CoA as substrate. The protein is Fatty acid oxidation complex subunit alpha of Enterobacter cloacae.